Reading from the N-terminus, the 275-residue chain is Methylglyoxal reductase DkgA (275 aa).

Catalysis depends on Tyr-51, which acts as the Proton donor. His-107 is a substrate binding site. 187–241 (SPLAQGGEGVFDQKVIRELADKYGKTPAQIVIRWHLDCGLVVIPKSVTPSRIAEN) is a binding site for NADP(+).

It belongs to the aldo/keto reductase family. As to quaternary structure, monomer.

The protein resides in the cytoplasm. The catalysed reaction is hydroxyacetone + NADP(+) = methylglyoxal + NADPH + H(+). Functionally, aldo-keto reductase that significantly contributes to cellular methylglyoxal detoxification by catalyzing the NADPH-dependent conversion of methylglyoxal to acetol. This Salmonella typhimurium (strain LT2 / SGSC1412 / ATCC 700720) protein is Methylglyoxal reductase DkgA.